Reading from the N-terminus, the 152-residue chain is Nucleoside diphosphate kinase (152 aa).

Residues K11, F59, R87, T93, R104, and N114 each coordinate ATP. The active-site Pros-phosphohistidine intermediate is H117.

Belongs to the NDK family. Homotetramer. It depends on Mg(2+) as a cofactor.

Its subcellular location is the cytoplasm. It catalyses the reaction a 2'-deoxyribonucleoside 5'-diphosphate + ATP = a 2'-deoxyribonucleoside 5'-triphosphate + ADP. The enzyme catalyses a ribonucleoside 5'-diphosphate + ATP = a ribonucleoside 5'-triphosphate + ADP. Its function is as follows. Major role in the synthesis of nucleoside triphosphates other than ATP. The ATP gamma phosphate is transferred to the NDP beta phosphate via a ping-pong mechanism, using a phosphorylated active-site intermediate. The protein is Nucleoside diphosphate kinase of Prochlorococcus marinus (strain MIT 9515).